Here is a 157-residue protein sequence, read N- to C-terminus: Ribosome maturation factor RimP (157 aa).

This sequence belongs to the RimP family.

The protein resides in the cytoplasm. Its function is as follows. Required for maturation of 30S ribosomal subunits. The protein is Ribosome maturation factor RimP of Synechococcus sp. (strain JA-3-3Ab) (Cyanobacteria bacterium Yellowstone A-Prime).